A 123-amino-acid chain; its full sequence is Large ribosomal subunit protein bL19 (123 aa).

Belongs to the bacterial ribosomal protein bL19 family.

In terms of biological role, this protein is located at the 30S-50S ribosomal subunit interface and may play a role in the structure and function of the aminoacyl-tRNA binding site. This chain is Large ribosomal subunit protein bL19, found in Ruegeria sp. (strain TM1040) (Silicibacter sp.).